The following is a 237-amino-acid chain: Proteasome subunit beta type-1-B (237 aa).

This sequence belongs to the peptidase T1B family. The 26S proteasome consists of a 20S proteasome core and two 19S regulatory subunits. The 20S proteasome core is composed of 28 subunits that are arranged in four stacked rings, resulting in a barrel-shaped structure. The two end rings are each formed by seven alpha subunits, and the two central rings are each formed by seven beta subunits. The catalytic chamber with the active sites is on the inside of the barrel.

The protein resides in the cytoplasm. It localises to the nucleus. Non-catalytic component of the proteasome, a multicatalytic proteinase complex which is characterized by its ability to cleave peptides with Arg, Phe, Tyr, Leu, and Glu adjacent to the leaving group at neutral or slightly basic pH. The proteasome has an ATP-dependent proteolytic activity. This chain is Proteasome subunit beta type-1-B (psmb1-B), found in Carassius auratus (Goldfish).